A 269-amino-acid polypeptide reads, in one-letter code: Ribosomal RNA small subunit methyltransferase J (269 aa).

Residues 125–126 and aspartate 179 contribute to the S-adenosyl-L-methionine site; that span reads ER.

The protein belongs to the methyltransferase superfamily. RsmJ family.

It localises to the cytoplasm. It catalyses the reaction guanosine(1516) in 16S rRNA + S-adenosyl-L-methionine = N(2)-methylguanosine(1516) in 16S rRNA + S-adenosyl-L-homocysteine + H(+). Functionally, specifically methylates the guanosine in position 1516 of 16S rRNA. This chain is Ribosomal RNA small subunit methyltransferase J, found in Pseudomonas savastanoi pv. phaseolicola (strain 1448A / Race 6) (Pseudomonas syringae pv. phaseolicola (strain 1448A / Race 6)).